We begin with the raw amino-acid sequence, 741 residues long: Type VI secretion system spike protein VgrG1b (741 aa).

Polar residues-rich tracts occupy residues 614–629 (SIGA…NETI) and 649–663 (GNQS…SRSV). The tract at residues 614-678 (SIGANRSESV…TSVGKDDSLD (65 aa)) is disordered.

This sequence belongs to the VgrG protein family.

The protein resides in the secreted. Functionally, part of the H1 type VI secretion system (H1-T6SS) specialized secretion system, which delivers several virulence factors in both prokaryotic and eukaryotic cells during infection. Allows the delivery of the Tse7 toxin to target cells where it exerts toxicity through its nuclease domain. In Pseudomonas aeruginosa (strain ATCC 15692 / DSM 22644 / CIP 104116 / JCM 14847 / LMG 12228 / 1C / PRS 101 / PAO1), this protein is Type VI secretion system spike protein VgrG1b.